We begin with the raw amino-acid sequence, 166 residues long: CDP-archaeol synthase (166 aa).

5 consecutive transmembrane segments (helical) span residues 7 to 27, 55 to 75, 78 to 98, 116 to 136, and 138 to 158; these read LLLS…GPFI, LIVA…FFTA, TLIS…GAFI, LDFV…ITWY, and FLFI…VAYL.

Belongs to the CDP-archaeol synthase family. Requires Mg(2+) as cofactor.

It localises to the cell membrane. It catalyses the reaction 2,3-bis-O-(geranylgeranyl)-sn-glycerol 1-phosphate + CTP + H(+) = CDP-2,3-bis-O-(geranylgeranyl)-sn-glycerol + diphosphate. It functions in the pathway membrane lipid metabolism; glycerophospholipid metabolism. In terms of biological role, catalyzes the formation of CDP-2,3-bis-(O-geranylgeranyl)-sn-glycerol (CDP-archaeol) from 2,3-bis-(O-geranylgeranyl)-sn-glycerol 1-phosphate (DGGGP) and CTP. This reaction is the third ether-bond-formation step in the biosynthesis of archaeal membrane lipids. This is CDP-archaeol synthase from Saccharolobus islandicus (strain L.S.2.15 / Lassen #1) (Sulfolobus islandicus).